We begin with the raw amino-acid sequence, 140 residues long: Nucleoside diphosphate kinase (140 aa).

Lys9, Phe57, Arg85, Thr91, Arg102, and Asn112 together coordinate ATP. His115 acts as the Pros-phosphohistidine intermediate in catalysis.

This sequence belongs to the NDK family. Homotetramer. Mg(2+) is required as a cofactor.

The protein localises to the cytoplasm. The enzyme catalyses a 2'-deoxyribonucleoside 5'-diphosphate + ATP = a 2'-deoxyribonucleoside 5'-triphosphate + ADP. The catalysed reaction is a ribonucleoside 5'-diphosphate + ATP = a ribonucleoside 5'-triphosphate + ADP. In terms of biological role, major role in the synthesis of nucleoside triphosphates other than ATP. The ATP gamma phosphate is transferred to the NDP beta phosphate via a ping-pong mechanism, using a phosphorylated active-site intermediate. This Chlorobaculum tepidum (strain ATCC 49652 / DSM 12025 / NBRC 103806 / TLS) (Chlorobium tepidum) protein is Nucleoside diphosphate kinase.